The sequence spans 495 residues: Probable cytosol aminopeptidase (495 aa).

Lysine 267 and aspartate 272 together coordinate Mn(2+). The active site involves lysine 279. Residues aspartate 290, aspartate 349, and glutamate 351 each coordinate Mn(2+). Residue arginine 353 is part of the active site.

The protein belongs to the peptidase M17 family. Mn(2+) is required as a cofactor.

It is found in the cytoplasm. It catalyses the reaction Release of an N-terminal amino acid, Xaa-|-Yaa-, in which Xaa is preferably Leu, but may be other amino acids including Pro although not Arg or Lys, and Yaa may be Pro. Amino acid amides and methyl esters are also readily hydrolyzed, but rates on arylamides are exceedingly low.. It carries out the reaction Release of an N-terminal amino acid, preferentially leucine, but not glutamic or aspartic acids.. Its function is as follows. Presumably involved in the processing and regular turnover of intracellular proteins. Catalyzes the removal of unsubstituted N-terminal amino acids from various peptides. This chain is Probable cytosol aminopeptidase, found in Histophilus somni (strain 2336) (Haemophilus somnus).